We begin with the raw amino-acid sequence, 85 residues long: Large ribosomal subunit protein bL27 (85 aa).

Positions methionine 1–phenylalanine 26 are disordered.

This sequence belongs to the bacterial ribosomal protein bL27 family.

In Saccharophagus degradans (strain 2-40 / ATCC 43961 / DSM 17024), this protein is Large ribosomal subunit protein bL27.